We begin with the raw amino-acid sequence, 399 residues long: Elongation factor Tu (399 aa).

Residues 10–207 (KPHMNVGTIG…AMDTYFPDPV (198 aa)) form the tr-type G domain. The segment at 19-26 (GQIDHGKT) is G1. 19 to 26 (GQIDHGKT) provides a ligand contact to GTP. Position 26 (Thr-26) interacts with Mg(2+). The interval 60 to 64 (GITIN) is G2. The G3 stretch occupies residues 81–84 (DCPG). GTP contacts are provided by residues 81–85 (DCPGH) and 136–139 (NKVD). Positions 136 to 139 (NKVD) are G4. A G5 region spans residues 173–175 (SAL).

Belongs to the TRAFAC class translation factor GTPase superfamily. Classic translation factor GTPase family. EF-Tu/EF-1A subfamily. As to quaternary structure, monomer.

It is found in the cytoplasm. It catalyses the reaction GTP + H2O = GDP + phosphate + H(+). In terms of biological role, GTP hydrolase that promotes the GTP-dependent binding of aminoacyl-tRNA to the A-site of ribosomes during protein biosynthesis. The chain is Elongation factor Tu from Fervidobacterium islandicum.